The primary structure comprises 279 residues: MSVSAFIRITRPHNAVVAGLTALIGYLIATGTLTPPSLLLAVIVALITAGGNVINDVRDVEIDRINRPDRPIPAGDISLAGARAYAAALFVGGIAIATLTTTLCLAIAIINSVILIVYAVRLKRTPVLGNVAVAYLAGSVFLFGGAFAGIEGLVRNLSLAAITFLATIARELLKDAEDVDGDAAGGARTLPMIVGVRKTGIFAFACACGAVAASLLPFGDWWGLFYLAGIAVVDLVILFGAFRGLSCTTPGCVRESNATSILRAGMFAALAVFAIAAVI.

Transmembrane regions (helical) follow at residues 27–47 (LIAT…VALI), 90–110 (FVGG…IAII), 127–147 (VLGN…GGAF), 199–219 (TGIF…LPFG), 222–242 (WGLF…FGAF), and 259–279 (TSIL…AAVI).

This sequence belongs to the UbiA prenyltransferase family. DGGGP synthase subfamily. The cofactor is Mg(2+).

The protein localises to the cell membrane. The enzyme catalyses sn-3-O-(geranylgeranyl)glycerol 1-phosphate + (2E,6E,10E)-geranylgeranyl diphosphate = 2,3-bis-O-(geranylgeranyl)-sn-glycerol 1-phosphate + diphosphate. Its pathway is membrane lipid metabolism; glycerophospholipid metabolism. Its function is as follows. Prenyltransferase that catalyzes the transfer of the geranylgeranyl moiety of geranylgeranyl diphosphate (GGPP) to the C2 hydroxyl of (S)-3-O-geranylgeranylglyceryl phosphate (GGGP). This reaction is the second ether-bond-formation step in the biosynthesis of archaeal membrane lipids. The chain is Digeranylgeranylglyceryl phosphate synthase from Methanoculleus marisnigri (strain ATCC 35101 / DSM 1498 / JR1).